We begin with the raw amino-acid sequence, 161 residues long: Nucleotide-binding protein NE2248 (161 aa).

It belongs to the YajQ family.

Nucleotide-binding protein. The polypeptide is Nucleotide-binding protein NE2248 (Nitrosomonas europaea (strain ATCC 19718 / CIP 103999 / KCTC 2705 / NBRC 14298)).